The chain runs to 372 residues: Sulfate/thiosulfate import ATP-binding protein CysA (372 aa).

The 235-residue stretch at 3 to 237 (IQVQHVTKRF…PATPFVYGFL (235 aa)) folds into the ABC transporter domain. 35 to 42 (GPSGCGKT) provides a ligand contact to ATP.

Belongs to the ABC transporter superfamily. Sulfate/tungstate importer (TC 3.A.1.6) family. The complex is composed of two ATP-binding proteins (CysA), two transmembrane proteins (CysT and CysW) and a solute-binding protein (CysP).

It is found in the cell inner membrane. The enzyme catalyses sulfate(out) + ATP + H2O = sulfate(in) + ADP + phosphate + H(+). It carries out the reaction thiosulfate(out) + ATP + H2O = thiosulfate(in) + ADP + phosphate + H(+). Part of the ABC transporter complex CysAWTP involved in sulfate/thiosulfate import. Responsible for energy coupling to the transport system. The polypeptide is Sulfate/thiosulfate import ATP-binding protein CysA (Ralstonia nicotianae (strain ATCC BAA-1114 / GMI1000) (Ralstonia solanacearum)).